The primary structure comprises 227 residues: MTARPLSELVEPGWARALQPVAEQVARMGQFLRAEIAAGRRYLPAGPNVLRAFTYPFDEVKVLIVGQDPYPTPGHAVGLSFSVAPDVSPLPRSLANIFQEYTADLGHPPPSCGDLTPWAQRGVLLLNRVLTVRPSNPASHRGKGWEPVTECAIRALTARQQPLVAILWGRDASTLKPILAQGNCVAIESPHPSPLSASRGFFGSRPFSRANKLLAEMGADEIDWRLP.

Residue aspartate 68 is the Proton acceptor of the active site.

The protein belongs to the uracil-DNA glycosylase (UDG) superfamily. UNG family.

The protein localises to the cytoplasm. It catalyses the reaction Hydrolyzes single-stranded DNA or mismatched double-stranded DNA and polynucleotides, releasing free uracil.. Its function is as follows. Excises uracil residues from the DNA which can arise as a result of misincorporation of dUMP residues by DNA polymerase or due to deamination of cytosine. The sequence is that of Uracil-DNA glycosylase from Mycobacterium avium (strain 104).